Reading from the N-terminus, the 429-residue chain is Chordin-like protein 2 (429 aa).

A signal peptide spans 1–25; sequence MVPEVRVLSSLLGLALLWFPLDSHA. 2 consecutive VWFC domains span residues 31 to 96 and 109 to 175; these read MFCL…PKCV and KSCQ…QACK. A glycan (N-linked (GlcNAc...) asparagine) is linked at Asn-114. Position 182 is a phosphoserine; by FAM20C (Ser-182). The tract at residues 182–224 is disordered; it reads SDEEDSVQSLHGVRHPQDPCSSDAGRKRGPGTPAPTGLSAPLS. One can recognise a VWFC 3 domain in the interval 250–315; that stretch reads KACVHGGKTY…VAGKCCKICP (66 aa).

Interacts with GDF5. May interact with BMP2, BMP4, BMP5, BMP6, BMP7 and INHBA. Post-translationally, phosphorylated by FAM20C in the extracellular medium. Highly expressed in uterus. Moderately expressed in heart, liver, prostate, testis and ovary. Weakly expressed in skeletal muscle, kidney, spleen, small intestine and colon. Expressed in the secretory epithelial cells of uterine endometrium, fallopian tubes, endocervical glands, bladder and prostate, as well as the transitional epithelium of the urinary bladder, and in bone osteoblasts (at protein level). In normal cartilage, expression was confined in a few chondrocytes in the superficial zone as well as in the middle zone. In diseased cartilage coming from osteoarthritic patients, expression was limited to the middle zone of chondrocytes. Isoform 1 and isoform 2 are expressed in fetal cerebellum and heart, while only isoform 2 is detected in fetal spleen. Isoform 2 present in plasma.

Its subcellular location is the secreted. It is found in the cytoplasm. Functionally, may inhibit BMPs activity by blocking their interaction with their receptors. Has a negative regulator effect on the cartilage formation/regeneration from immature mesenchymal cells, by preventing or reducing the rate of matrix accumulation. Implicated in tumor angiogenesis. May play a role during myoblast and osteoblast differentiation, and maturation. This is Chordin-like protein 2 (CHRDL2) from Homo sapiens (Human).